A 376-amino-acid polypeptide reads, in one-letter code: Phosphoserine aminotransferase (376 aa).

Residue R46 participates in L-glutamate binding. Pyridoxal 5'-phosphate is bound by residues A80–T81, F104, T150, D172, and Q195. K196 is subject to N6-(pyridoxal phosphate)lysine. N247–T248 is a binding site for pyridoxal 5'-phosphate.

This sequence belongs to the class-V pyridoxal-phosphate-dependent aminotransferase family. SerC subfamily. As to quaternary structure, homodimer. The cofactor is pyridoxal 5'-phosphate.

The protein resides in the cytoplasm. It carries out the reaction O-phospho-L-serine + 2-oxoglutarate = 3-phosphooxypyruvate + L-glutamate. The catalysed reaction is 4-(phosphooxy)-L-threonine + 2-oxoglutarate = (R)-3-hydroxy-2-oxo-4-phosphooxybutanoate + L-glutamate. Its pathway is amino-acid biosynthesis; L-serine biosynthesis; L-serine from 3-phospho-D-glycerate: step 2/3. It participates in cofactor biosynthesis; pyridoxine 5'-phosphate biosynthesis; pyridoxine 5'-phosphate from D-erythrose 4-phosphate: step 3/5. Its function is as follows. Catalyzes the reversible conversion of 3-phosphohydroxypyruvate to phosphoserine and of 3-hydroxy-2-oxo-4-phosphonooxybutanoate to phosphohydroxythreonine. In Corynebacterium glutamicum (strain R), this protein is Phosphoserine aminotransferase.